Reading from the N-terminus, the 202-residue chain is Ras-related protein Rab-2B (202 aa).

31–38 (GDSAVGKS) is a binding site for GTP. The Effector region signature appears at 53 to 61 (SDFTIGVEF). GTP is bound by residues 79-83 (DTAGQ) and 137-140 (NKAD).

It belongs to the small GTPase superfamily. Rab family. This sequence lacks the C-terminal cysteine motifs subject to isoprenylation in other Rab proteins.

This is Ras-related protein Rab-2B (rab2B) from Dictyostelium discoideum (Social amoeba).